A 327-amino-acid polypeptide reads, in one-letter code: tRNA dimethylallyltransferase (327 aa).

14-21 (GPTASGKT) lines the ATP pocket. A substrate-binding site is contributed by 16 to 21 (TASGKT). Interaction with substrate tRNA regions lie at residues 39-42 (DSAL) and 163-167 (QRIQR).

The protein belongs to the IPP transferase family. Monomer. The cofactor is Mg(2+).

The catalysed reaction is adenosine(37) in tRNA + dimethylallyl diphosphate = N(6)-dimethylallyladenosine(37) in tRNA + diphosphate. In terms of biological role, catalyzes the transfer of a dimethylallyl group onto the adenine at position 37 in tRNAs that read codons beginning with uridine, leading to the formation of N6-(dimethylallyl)adenosine (i(6)A). In Xanthomonas oryzae pv. oryzae (strain MAFF 311018), this protein is tRNA dimethylallyltransferase.